We begin with the raw amino-acid sequence, 509 residues long: Serine/threonine protein kinase OSK4 (509 aa).

The Protein kinase domain occupies 17-269 (YNLGRTLGIG…IREIREHQWF (253 aa)). ATP-binding positions include 23–31 (LGIGSFGKV) and Lys-46. Residue Asp-140 is the Proton acceptor of the active site. The 41-residue stretch at 290–330 (MIDEDTLQDVVNLGYEKDHVCESLRNRLQNEATVAYYLLLD) folds into the UBA domain. In terms of domain architecture, KA1 spans 460 to 508 (NGRLPAVIKFEIQLYKSRDEKYLLDMQRVTGPQLLFLDFCAAFLTKLRV).

It belongs to the protein kinase superfamily. Ser/Thr protein kinase family. In terms of assembly, interacts with HDR1. As to expression, strongly expressed in immature seeds. Mostly expressed in panicles, leaf sheaths and roots, and to a lower extent, in germinating seeds and leaf blades.

The protein localises to the nucleus. The catalysed reaction is L-seryl-[protein] + ATP = O-phospho-L-seryl-[protein] + ADP + H(+). The enzyme catalyses L-threonyl-[protein] + ATP = O-phospho-L-threonyl-[protein] + ADP + H(+). Suppressor of flowering in long days (LD) via the that up-regulation of HD1 and the down-regulation of EHD1. Can phosphorylate HD1 in the presence of HDR1. The polypeptide is Serine/threonine protein kinase OSK4 (Oryza sativa subsp. indica (Rice)).